We begin with the raw amino-acid sequence, 437 residues long: Matrix remodeling-associated protein 8 (437 aa).

The signal sequence occupies residues Met-1 to Leu-22. The Extracellular segment spans residues Tyr-23 to Gln-339. 2 consecutive Ig-like V-type domains span residues Pro-32–Thr-159 and Glu-167–Thr-294. Asn-41, Asn-121, Asn-246, and Asn-304 each carry an N-linked (GlcNAc...) asparagine glycan. 2 cysteine pairs are disulfide-bonded: Cys-54/Cys-139 and Cys-188/Cys-274. A helical transmembrane segment spans residues Leu-340 to Ile-360. Topologically, residues Thr-361–Lys-437 are cytoplasmic.

As to quaternary structure, homodimer in cis. Does not appear to form trans-homodimers.

It localises to the cell membrane. Transmembrane protein which can modulate activity of various signaling pathways, probably via binding to integrin ITGAV:ITGB3. Mediates heterophilic cell-cell interactions in vitro. In Gallus gallus (Chicken), this protein is Matrix remodeling-associated protein 8 (MXRA8).